The chain runs to 433 residues: Putative ankyrin repeat protein R578 (433 aa).

ANK repeat units lie at residues 166–195 (NKEI…ILSE), 197–224 (DHLI…LSKL), 356–386 (VNPN…DIHS), and 388–415 (PSLI…ICDE).

This is Putative ankyrin repeat protein R578 from Acanthamoeba polyphaga mimivirus (APMV).